Consider the following 63-residue polypeptide: Sperm protamine P1 (63 aa).

A disordered region spans residues M1 to Y63.

The protein belongs to the protamine P1 family. As to expression, testis.

The protein resides in the nucleus. Its subcellular location is the chromosome. In terms of biological role, protamines substitute for histones in the chromatin of sperm during the haploid phase of spermatogenesis. They compact sperm DNA into a highly condensed, stable and inactive complex. The protein is Sperm protamine P1 (PRM1) of Phascogale tapoatafa (Common wambenger).